We begin with the raw amino-acid sequence, 1382 residues long: Hepatocyte growth factor receptor (1382 aa).

Positions 1–24 are cleaved as a signal peptide; that stretch reads MKAPAVLAPGVLVLLFTLVRKSHG. Residues 25-935 lie on the Extracellular side of the membrane; the sequence is ECEEALAKSK…VQPDQNFTGL (911 aa). The Sema domain occupies 27–516; the sequence is EEALAKSKMN…TGKKITKIPL (490 aa). The N-linked (GlcNAc...) asparagine glycan is linked to Asn-45. 4 disulfide bridges follow: Cys-95–Cys-101, Cys-98–Cys-160, Cys-133–Cys-141, and Cys-173–Cys-176. An N-linked (GlcNAc...) asparagine glycan is attached at Asn-106. N-linked (GlcNAc...) asparagine glycans are attached at residues Asn-203 and Asn-359. Intrachain disulfides connect Cys-299–Cys-364 and Cys-386–Cys-398. Asn-400, Asn-406, and Asn-450 each carry an N-linked (GlcNAc...) asparagine glycan. Intrachain disulfides connect Cys-521-Cys-539, Cys-527-Cys-562, Cys-530-Cys-546, and Cys-542-Cys-552. IPT/TIG domains are found at residues 564 to 656, 658 to 740, and 743 to 837; these read PTIY…FSYV, PVIT…FSYQ, and PTVY…LIYV. A glycan (O-linked (Man) threonine) is linked at Thr-583. N-linked (GlcNAc...) asparagine glycosylation is found at Asn-608 and Asn-636. Thr-677 carries O-linked (Man) threonine glycosylation. N-linked (GlcNAc...) asparagine glycosylation occurs at Asn-751. The O-linked (Man) threonine glycan is linked to Thr-762. N-linked (GlcNAc...) asparagine glycosylation is found at Asn-786, Asn-880, and Asn-931. The helical transmembrane segment at 936 to 956 threads the bilayer; the sequence is IVGVVSISIILLLLLGLFLWL. The Cytoplasmic portion of the chain corresponds to 957–1382; it reads KKRKQIKDLG…QDSVDDEVDT (426 aa). Ser-967 is subject to Phosphoserine. The residue at position 978 (Thr-978) is a Phosphothreonine. Phosphoserine occurs at positions 991, 998, and 1001. Position 1004 is a phosphotyrosine (Tyr-1004). The region spanning 1079 to 1346 is the Protein kinase domain; it reads VHFNEVIGRG…RISAIFSTFI (268 aa). Residues 1085 to 1093 and Lys-1111 contribute to the ATP site; that span reads IGRGHFGCV. The active-site Proton acceptor is the Asp-1205. Positions 1213–1382 are interaction with RANBP9; the sequence is LDEKFTVKVA…QDSVDDEVDT (170 aa). Tyr-1231 is subject to Phosphotyrosine. 2 positions are modified to phosphotyrosine; by autocatalysis: Tyr-1235 and Tyr-1236. Thr-1290 carries the post-translational modification Phosphothreonine. Residues 1321–1360 form an interaction with MUC20 region; the sequence is WHPKAEMRPSFSELVSRISAIFSTFIGEHYVHVNTTYVNV. Phosphotyrosine; by autocatalysis is present on residues Tyr-1350 and Tyr-1357. The residue at position 1366 (Tyr-1366) is a Phosphotyrosine.

It belongs to the protein kinase superfamily. Tyr protein kinase family. As to quaternary structure, heterodimer made of an alpha chain (50 kDa) and a beta chain (145 kDa) which are disulfide linked. Binds PLXNB1. Interacts when phosphorylated with downstream effectors including STAT3, PIK3R1, SRC, PCLG1, GRB2 and GAB1. Interacts with SPSB1, SPSB2 and SPSB4. Interacts with INPP5D/SHIP1. When phosphorylated at Tyr-1357, interacts with INPPL1/SHIP2. Interacts with RANBP9 and RANBP10, as well as SPSB1, SPSB2, SPSB3 and SPSB4. SPSB1 binding occurs in the presence and in the absence of HGF, however HGF treatment has a positive effect on this interaction. Interacts with MUC20; prevents interaction with GRB2 and suppresses hepatocyte growth factor-induced cell proliferation. Interacts with GRB10. Interacts with PTPN1 and PTPN2. Interacts with HSP90AA1 and HSP90AB1; the interaction suppresses MET kinase activity. Interacts with tensin TNS3. Interacts (when phosphorylated) with tensin TNS4 (via SH2 domain); the interaction increases MET protein stability by inhibiting MET endocytosis and subsequent lysosomal degradation. Post-translationally, autophosphorylated in response to ligand binding on Tyr-1235 and Tyr-1236 in the kinase domain leading to further phosphorylation of Tyr-1350 and Tyr-1357 in the C-terminal multifunctional docking site. Dephosphorylated by PTPRJ at Tyr-1350 and Tyr-1366. Dephosphorylated by PTPN1 and PTPN2. Ubiquitinated. Ubiquitination by CBL regulates the receptor stability and activity through proteasomal degradation. In terms of processing, O-mannosylation of IPT/TIG domains by TMEM260 is required for protein maturation. O-mannosylated residues are composed of single mannose glycans that are not elongated or modified.

The protein localises to the membrane. It carries out the reaction L-tyrosyl-[protein] + ATP = O-phospho-L-tyrosyl-[protein] + ADP + H(+). Its activity is regulated as follows. In its inactive state, the C-terminal tail interacts with the catalytic domain and inhibits the kinase activity. Upon ligand binding, the C-terminal tail is displaced and becomes phosphorylated, thus increasing the kinase activity. In terms of biological role, receptor tyrosine kinase that transduces signals from the extracellular matrix into the cytoplasm by binding to hepatocyte growth factor/HGF ligand. Regulates many physiological processes including proliferation, scattering, morphogenesis and survival. Ligand binding at the cell surface induces autophosphorylation of MET on its intracellular domain that provides docking sites for downstream signaling molecules. Following activation by ligand, interacts with the PI3-kinase subunit PIK3R1, PLCG1, SRC, GRB2, STAT3 or the adapter GAB1. Recruitment of these downstream effectors by MET leads to the activation of several signaling cascades including the RAS-ERK, PI3 kinase-AKT, or PLCgamma-PKC. The RAS-ERK activation is associated with the morphogenetic effects while PI3K/AKT coordinates prosurvival effects. During embryonic development, MET signaling plays a role in gastrulation, development and migration of muscles and neuronal precursors, angiogenesis and kidney formation. In adults, participates in wound healing as well as organ regeneration and tissue remodeling. Also promotes differentiation and proliferation of hematopoietic cells. The chain is Hepatocyte growth factor receptor (MET) from Loxodonta africana (African elephant).